The primary structure comprises 262 residues: Ribosome-recycling factor, mitochondrial (262 aa).

The transit peptide at 1 to 55 (MALGLRCFRLVHPAFCNSLAALTRPVSEVTLQTVRGRQNDHGQCMAYAAVPVRHF) directs the protein to the mitochondrion.

This sequence belongs to the RRF family.

Its subcellular location is the mitochondrion. Responsible for the disassembly of ribosomes from messenger RNA at the termination of mitochondrial protein biosynthesis. Acts in collaboration with GFM2. Promotes mitochondrial ribosome recycling by dissolution of intersubunit contacts. The polypeptide is Ribosome-recycling factor, mitochondrial (MRRF) (Bos taurus (Bovine)).